Reading from the N-terminus, the 282-residue chain is ATP phosphoribosyltransferase (282 aa).

It belongs to the ATP phosphoribosyltransferase family. Long subfamily. Mg(2+) serves as cofactor.

The protein localises to the cytoplasm. It carries out the reaction 1-(5-phospho-beta-D-ribosyl)-ATP + diphosphate = 5-phospho-alpha-D-ribose 1-diphosphate + ATP. It participates in amino-acid biosynthesis; L-histidine biosynthesis; L-histidine from 5-phospho-alpha-D-ribose 1-diphosphate: step 1/9. Its activity is regulated as follows. Feedback inhibited by histidine. In terms of biological role, catalyzes the condensation of ATP and 5-phosphoribose 1-diphosphate to form N'-(5'-phosphoribosyl)-ATP (PR-ATP). Has a crucial role in the pathway because the rate of histidine biosynthesis seems to be controlled primarily by regulation of HisG enzymatic activity. The sequence is that of ATP phosphoribosyltransferase from Pyrobaculum calidifontis (strain DSM 21063 / JCM 11548 / VA1).